A 1076-amino-acid chain; its full sequence is Guanylyl cyclase C (1076 aa).

Positions 1–23 (MKSPLLGLVVWSLLLQLLQPGLA) are cleaved as a signal peptide. Over 24–433 (FWNSQISQNC…PHDIPGLGPH (410 aa)) the chain is Extracellular. N-linked (GlcNAc...) asparagine glycosylation is found at N35, N82, N191, N198, N287, N306, N310, N348, and N405. The chain crosses the membrane as a helical span at residues 434 to 457 (ILLIAVCTLAGVVVLILLIALLVL). Residues 458–1076 (RKYKKDNELR…NTTDQDSTYF (619 aa)) are Cytoplasmic-facing. Residues 492 to 752 (LKIDDDKKRD…KIENTLAKIF (261 aa)) form the Protein kinase domain. In terms of domain architecture, Guanylate cyclase spans 827–957 (TVYFSDIVGF…DTVNTASRME (131 aa)).

It belongs to the adenylyl cyclase class-4/guanylyl cyclase family. As to quaternary structure, homotrimer. Interacts via its C-terminal region with NHERF4. Interacts with the lectin chaperone VIP36. Post-translationally, glycosylation at Asn-62 is required for interaction with VIP36 while glycosylation at Asn-348 and Asn-405 modulates ligand-mediated GC-C activation.

It localises to the cell membrane. The protein localises to the endoplasmic reticulum membrane. The enzyme catalyses GTP = 3',5'-cyclic GMP + diphosphate. Functionally, guanylyl cyclase that catalyzes synthesis of cyclic GMP (cGMP) from GTP. This chain is Guanylyl cyclase C (GUCY2C), found in Cavia porcellus (Guinea pig).